A 1088-amino-acid chain; its full sequence is DNA-directed RNA polymerase subunit beta (1088 aa).

The protein belongs to the RNA polymerase beta chain family. As to quaternary structure, in plastids the minimal PEP RNA polymerase catalytic core is composed of four subunits: alpha, beta, beta', and beta''. When a (nuclear-encoded) sigma factor is associated with the core the holoenzyme is formed, which can initiate transcription.

Its subcellular location is the plastid. The protein resides in the chloroplast. It catalyses the reaction RNA(n) + a ribonucleoside 5'-triphosphate = RNA(n+1) + diphosphate. DNA-dependent RNA polymerase catalyzes the transcription of DNA into RNA using the four ribonucleoside triphosphates as substrates. In Ostreococcus tauri, this protein is DNA-directed RNA polymerase subunit beta.